We begin with the raw amino-acid sequence, 410 residues long: Ribulose bisphosphate carboxylase large chain (410 aa).

2 residues coordinate substrate: Asn-100 and Thr-150. The Proton acceptor role is filled by Lys-152. Residue Lys-154 participates in substrate binding. Residues Lys-178, Asp-180, and Glu-181 each contribute to the Mg(2+) site. Lys-178 carries the post-translational modification N6-carboxylysine. The active-site Proton acceptor is His-271. Arg-272, His-304, and Ser-356 together coordinate substrate.

This sequence belongs to the RuBisCO large chain family. Type I subfamily. Heterohexadecamer of 8 large chains and 8 small chains; disulfide-linked. The disulfide link is formed within the large subunit homodimers. Mg(2+) is required as a cofactor. In terms of processing, the disulfide bond which can form in the large chain dimeric partners within the hexadecamer appears to be associated with oxidative stress and protein turnover.

It localises to the plastid. It is found in the chloroplast. It carries out the reaction 2 (2R)-3-phosphoglycerate + 2 H(+) = D-ribulose 1,5-bisphosphate + CO2 + H2O. The enzyme catalyses D-ribulose 1,5-bisphosphate + O2 = 2-phosphoglycolate + (2R)-3-phosphoglycerate + 2 H(+). Functionally, ruBisCO catalyzes two reactions: the carboxylation of D-ribulose 1,5-bisphosphate, the primary event in carbon dioxide fixation, as well as the oxidative fragmentation of the pentose substrate in the photorespiration process. Both reactions occur simultaneously and in competition at the same active site. In Gleichenia japonica (Urajiro), this protein is Ribulose bisphosphate carboxylase large chain (rbcL).